The sequence spans 295 residues: Acetylglutamate kinase (295 aa).

Substrate-binding positions include 66–67 (GG), Arg88, and Asn193.

The protein belongs to the acetylglutamate kinase family. ArgB subfamily.

Its subcellular location is the cytoplasm. The enzyme catalyses N-acetyl-L-glutamate + ATP = N-acetyl-L-glutamyl 5-phosphate + ADP. The protein operates within amino-acid biosynthesis; L-arginine biosynthesis; N(2)-acetyl-L-ornithine from L-glutamate: step 2/4. Catalyzes the ATP-dependent phosphorylation of N-acetyl-L-glutamate. The chain is Acetylglutamate kinase from Bradyrhizobium diazoefficiens (strain JCM 10833 / BCRC 13528 / IAM 13628 / NBRC 14792 / USDA 110).